We begin with the raw amino-acid sequence, 213 residues long: Orotate phosphoribosyltransferase (213 aa).

5-phospho-alpha-D-ribose 1-diphosphate is bound at residue lysine 26. 34 to 35 lines the orotate pocket; that stretch reads FF. Residues 72-73, arginine 99, lysine 100, lysine 103, histidine 105, and 124-132 each bind 5-phospho-alpha-D-ribose 1-diphosphate; these read YK and DDVITAGTA. Threonine 128 and arginine 156 together coordinate orotate.

This sequence belongs to the purine/pyrimidine phosphoribosyltransferase family. PyrE subfamily. As to quaternary structure, homodimer. Mg(2+) serves as cofactor.

The catalysed reaction is orotidine 5'-phosphate + diphosphate = orotate + 5-phospho-alpha-D-ribose 1-diphosphate. It functions in the pathway pyrimidine metabolism; UMP biosynthesis via de novo pathway; UMP from orotate: step 1/2. In terms of biological role, catalyzes the transfer of a ribosyl phosphate group from 5-phosphoribose 1-diphosphate to orotate, leading to the formation of orotidine monophosphate (OMP). This Haemophilus influenzae (strain ATCC 51907 / DSM 11121 / KW20 / Rd) protein is Orotate phosphoribosyltransferase.